A 268-amino-acid chain; its full sequence is Putative carbamate hydrolase RutD (268 aa).

The AB hydrolase-1 domain maps to 24-243 (VILSAGLGGS…NATLDIAPWG (220 aa)).

It belongs to the AB hydrolase superfamily. Hydrolase RutD family.

The enzyme catalyses carbamate + 2 H(+) = NH4(+) + CO2. Its function is as follows. Involved in pyrimidine catabolism. May facilitate the hydrolysis of carbamate, a reaction that can also occur spontaneously. The sequence is that of Putative carbamate hydrolase RutD from Caulobacter sp. (strain K31).